A 404-amino-acid chain; its full sequence is RNA exonuclease 3 (404 aa).

One can recognise an Exonuclease domain in the interval valine 243–valine 389.

The protein belongs to the REXO1/REXO3 family.

The protein resides in the cytoplasm. Its subcellular location is the nucleus. Functionally, 3' to 5' exoribonuclease required for proper 3' end maturation of MRP RNA and of the U5L snRNA. This chain is RNA exonuclease 3 (REX3), found in Saccharomyces cerevisiae (strain ATCC 204508 / S288c) (Baker's yeast).